The primary structure comprises 492 residues: MTLWINGDWITGQGERRRKTNPVSAEILWQGNDANAAQVAEACQAARAAFPRWARQPFAARQAIVEKFAALLEAHKAELTEVIARETGKPRWEAATEVTAMINKIAISIKAYHARTGAQKSELVDGAATLRHRPHGVLAVFGPYNFPGHLPNGHIVPALLAGNTLIFKPSELTPWTGETVIKLWERAGLPAGVLNLVQGGRETGQALSSLDDLDGLLFTGSASTGYQLHRQLSGQPEKILALEMGGNNPLIIEDAANIDAAVHLTLQSAFITAGQRCTCARRLLVKQGAQGDAFLARLVDVAGRLQPGRWDDDPQPFIGGLISAQAAQHVMEAWRQREALGGRTLLAPRKVKEGTSLLTPGIIELTGVADVPDEEVFGPLLNVWRYAHFDEAIRLANNTRFGLSCGLVSTDRAQFEQLLLEARAGIVNWNKPLTGAASTAPFGGVGASGNHRPSAWYAADYCAWPMASLESPELTLPATLSPGLDFSRREAV.

Position 220 to 225 (220 to 225 (GSASTG)) interacts with NAD(+). Residues Glu243 and Cys277 contribute to the active site.

It belongs to the aldehyde dehydrogenase family. AstD subfamily.

The catalysed reaction is N-succinyl-L-glutamate 5-semialdehyde + NAD(+) + H2O = N-succinyl-L-glutamate + NADH + 2 H(+). Its pathway is amino-acid degradation; L-arginine degradation via AST pathway; L-glutamate and succinate from L-arginine: step 4/5. Functionally, catalyzes the NAD-dependent reduction of succinylglutamate semialdehyde into succinylglutamate. The protein is N-succinylglutamate 5-semialdehyde dehydrogenase of Salmonella typhimurium (strain LT2 / SGSC1412 / ATCC 700720).